The sequence spans 528 residues: Probable rhamnogalacturonate lyase A (528 aa).

The N-terminal stretch at M1–A20 is a signal peptide. Cystine bridges form between C50-C93 and C184-C193. N56 carries an N-linked (GlcNAc...) asparagine glycan. N351 carries N-linked (GlcNAc...) asparagine glycosylation.

Belongs to the polysaccharide lyase 4 family.

It is found in the secreted. It carries out the reaction Endotype eliminative cleavage of L-alpha-rhamnopyranosyl-(1-&gt;4)-alpha-D-galactopyranosyluronic acid bonds of rhamnogalacturonan I domains in ramified hairy regions of pectin leaving L-rhamnopyranose at the reducing end and 4-deoxy-4,5-unsaturated D-galactopyranosyluronic acid at the non-reducing end.. Functionally, pectinolytic enzymes consist of four classes of enzymes: pectin lyase, polygalacturonase, pectin methylesterase and rhamnogalacturonase. Degrades the rhamnogalacturonan I (RG-I) backbone of pectin. Active against linseed rhamnogalacturonan. The protein is Probable rhamnogalacturonate lyase A (rglA) of Aspergillus clavatus (strain ATCC 1007 / CBS 513.65 / DSM 816 / NCTC 3887 / NRRL 1 / QM 1276 / 107).